We begin with the raw amino-acid sequence, 40 residues long: Photosystem II reaction center protein J (40 aa).

Residues 8–28 (IPLWLIGTVTGIIVIGLLGIF) traverse the membrane as a helical segment.

The protein belongs to the PsbJ family. In terms of assembly, PSII is composed of 1 copy each of membrane proteins PsbA, PsbB, PsbC, PsbD, PsbE, PsbF, PsbH, PsbI, PsbJ, PsbK, PsbL, PsbM, PsbT, PsbX, PsbY, PsbZ, Psb30/Ycf12, at least 3 peripheral proteins of the oxygen-evolving complex and a large number of cofactors. It forms dimeric complexes.

The protein localises to the plastid. It is found in the chloroplast thylakoid membrane. Functionally, one of the components of the core complex of photosystem II (PSII). PSII is a light-driven water:plastoquinone oxidoreductase that uses light energy to abstract electrons from H(2)O, generating O(2) and a proton gradient subsequently used for ATP formation. It consists of a core antenna complex that captures photons, and an electron transfer chain that converts photonic excitation into a charge separation. This is Photosystem II reaction center protein J from Pinus koraiensis (Korean pine).